Reading from the N-terminus, the 438-residue chain is RING finger protein 150 (438 aa).

The first 34 residues, 1-34 (MAMSLIQACCSLALSTWLLSFCFVHLLCLDFTVA), serve as a signal peptide directing secretion. Residues 35-208 (EKEEWYTAFV…NLQKYVSRTS (174 aa)) are Extracellular-facing. N-linked (GlcNAc...) asparagine glycans are attached at residues Asn45, Asn125, Asn153, and Asn186. Positions 81-183 (SPKQDARGEV…PKGKEIVSLL (103 aa)) constitute a PA domain. The helical transmembrane segment at 209–229 (VVFVSISFIVLMIISLAWLVF) threads the bilayer. Residues 230–438 (YYIQRFRYAN…TDQDCEEVKS (209 aa)) are Cytoplasmic-facing. An RING-type; atypical zinc finger spans residues 278–319 (CAVCIEGYKPNDVVRILPCRHLFHKSCVDPWLLDHRTCPMCK).

The protein localises to the membrane. In Homo sapiens (Human), this protein is RING finger protein 150 (RNF150).